A 356-amino-acid polypeptide reads, in one-letter code: 3-dehydroquinate synthase (356 aa).

Residues Gly106–Asp110, Thr130–Thr131, Lys143, and Lys152 contribute to the NAD(+) site. Positions 185, 248, and 265 each coordinate Zn(2+).

It belongs to the sugar phosphate cyclases superfamily. Dehydroquinate synthase family. Co(2+) serves as cofactor. It depends on Zn(2+) as a cofactor. Requires NAD(+) as cofactor.

The protein resides in the cytoplasm. It carries out the reaction 7-phospho-2-dehydro-3-deoxy-D-arabino-heptonate = 3-dehydroquinate + phosphate. Its pathway is metabolic intermediate biosynthesis; chorismate biosynthesis; chorismate from D-erythrose 4-phosphate and phosphoenolpyruvate: step 2/7. Catalyzes the conversion of 3-deoxy-D-arabino-heptulosonate 7-phosphate (DAHP) to dehydroquinate (DHQ). The protein is 3-dehydroquinate synthase of Thermoanaerobacter pseudethanolicus (strain ATCC 33223 / 39E) (Clostridium thermohydrosulfuricum).